Consider the following 660-residue polypeptide: Probable E3 ubiquitin ligase complex SCF subunit sconB (660 aa).

The span at 1–13 shows a compositional bias: basic and acidic residues; sequence MHNENSVLRDAKE. 2 disordered regions span residues 1–34 and 86–108; these read MHNE…MTPY and LGTG…RRQA. One can recognise an F-box domain in the interval 175-221; sequence IDFITALPPEISFKILSYLDTASLCRAAQVSRGWKCLADDDVVWHRM. 7 WD repeats span residues 340–379, 381–419, 421–457, 459–500, 542–586, 587–626, and 629–660; these read GHTN…RTLT, HTSG…STYT, HLGG…TFLL, GHSD…RTFQ, SQVS…CLRT, FFGH…CERT, and GHSG…SFKN. Residues 521-553 are disordered; it reads GHDASHEEDSNASVSGDESPSSQVSCSPTAAFF. Residues 531–548 are compositionally biased toward polar residues; the sequence is NASVSGDESPSSQVSCSP.

This sequence belongs to the WD repeat MET30/SCONB/SCON-2 family. In terms of assembly, component of the SCF(sconB) E3 ubiquitin ligase complex.

Its pathway is protein modification; protein ubiquitination. Functionally, component of the SCF(sconB) E3 ubiquitin ligase complex involved in the regulation of sulfur metabolite repression, probably by mediating the inactivation or degradation of the metR transcription factor. This is Probable E3 ubiquitin ligase complex SCF subunit sconB (sconB) from Talaromyces marneffei (strain ATCC 18224 / CBS 334.59 / QM 7333) (Penicillium marneffei).